Consider the following 436-residue polypeptide: Histidinol dehydrogenase (436 aa).

Residues Tyr-136, Gln-198, and Asn-221 each contribute to the NAD(+) site. The substrate site is built by Ser-244, Gln-266, and His-269. Gln-266 and His-269 together coordinate Zn(2+). Catalysis depends on proton acceptor residues Glu-334 and His-335. Residues His-335, Asp-368, Glu-422, and His-427 each contribute to the substrate site. Asp-368 serves as a coordination point for Zn(2+). Residue His-427 coordinates Zn(2+).

The protein belongs to the histidinol dehydrogenase family. The cofactor is Zn(2+).

The enzyme catalyses L-histidinol + 2 NAD(+) + H2O = L-histidine + 2 NADH + 3 H(+). It participates in amino-acid biosynthesis; L-histidine biosynthesis; L-histidine from 5-phospho-alpha-D-ribose 1-diphosphate: step 9/9. Its function is as follows. Catalyzes the sequential NAD-dependent oxidations of L-histidinol to L-histidinaldehyde and then to L-histidine. This chain is Histidinol dehydrogenase, found in Dehalococcoides mccartyi (strain ATCC BAA-2266 / KCTC 15142 / 195) (Dehalococcoides ethenogenes (strain 195)).